We begin with the raw amino-acid sequence, 98 residues long: NADH-ubiquinone oxidoreductase chain 4L (98 aa).

3 consecutive transmembrane segments (helical) span residues 1 to 21 (MSLT…GLLM), 29 to 49 (SLLC…MTIL), and 61 to 81 (IILL…LVMV).

The protein belongs to the complex I subunit 4L family. Core subunit of respiratory chain NADH dehydrogenase (Complex I) which is composed of 45 different subunits.

Its subcellular location is the mitochondrion inner membrane. It carries out the reaction a ubiquinone + NADH + 5 H(+)(in) = a ubiquinol + NAD(+) + 4 H(+)(out). Functionally, core subunit of the mitochondrial membrane respiratory chain NADH dehydrogenase (Complex I) which catalyzes electron transfer from NADH through the respiratory chain, using ubiquinone as an electron acceptor. Part of the enzyme membrane arm which is embedded in the lipid bilayer and involved in proton translocation. The protein is NADH-ubiquinone oxidoreductase chain 4L (MT-ND4L) of Chiroderma trinitatum (Little big-eyed bat).